The sequence spans 249 residues: 1-(5-phosphoribosyl)-5-[(5-phosphoribosylamino)methylideneamino] imidazole-4-carboxamide isomerase (249 aa).

Residue D11 is the Proton acceptor of the active site. D132 acts as the Proton donor in catalysis.

It belongs to the HisA/HisF family.

The protein resides in the cytoplasm. It carries out the reaction 1-(5-phospho-beta-D-ribosyl)-5-[(5-phospho-beta-D-ribosylamino)methylideneamino]imidazole-4-carboxamide = 5-[(5-phospho-1-deoxy-D-ribulos-1-ylimino)methylamino]-1-(5-phospho-beta-D-ribosyl)imidazole-4-carboxamide. It functions in the pathway amino-acid biosynthesis; L-histidine biosynthesis; L-histidine from 5-phospho-alpha-D-ribose 1-diphosphate: step 4/9. This Nitrobacter winogradskyi (strain ATCC 25391 / DSM 10237 / CIP 104748 / NCIMB 11846 / Nb-255) protein is 1-(5-phosphoribosyl)-5-[(5-phosphoribosylamino)methylideneamino] imidazole-4-carboxamide isomerase.